Here is a 297-residue protein sequence, read N- to C-terminus: Mycothiol acetyltransferase (297 aa).

N-acetyltransferase domains follow at residues 7–156 and 153–297; these read VFSD…VTIR and VTIR…PPPH. Glu38 contacts 1D-myo-inositol 2-(L-cysteinylamino)-2-deoxy-alpha-D-glucopyranoside. An acetyl-CoA-binding site is contributed by 79 to 81; it reads VVV. Residues Glu180, Lys219, and Glu227 each contribute to the 1D-myo-inositol 2-(L-cysteinylamino)-2-deoxy-alpha-D-glucopyranoside site. Acetyl-CoA-binding positions include 231–233 and 238–244; these read VGV and QGLGLGR. Residue Tyr265 participates in 1D-myo-inositol 2-(L-cysteinylamino)-2-deoxy-alpha-D-glucopyranoside binding. 270–275 contributes to the acetyl-CoA binding site; sequence NRPALR.

This sequence belongs to the acetyltransferase family. MshD subfamily. In terms of assembly, monomer.

It catalyses the reaction 1D-myo-inositol 2-(L-cysteinylamino)-2-deoxy-alpha-D-glucopyranoside + acetyl-CoA = mycothiol + CoA + H(+). Functionally, catalyzes the transfer of acetyl from acetyl-CoA to desacetylmycothiol (Cys-GlcN-Ins) to form mycothiol. The polypeptide is Mycothiol acetyltransferase (Thermomonospora curvata (strain ATCC 19995 / DSM 43183 / JCM 3096 / KCTC 9072 / NBRC 15933 / NCIMB 10081 / Henssen B9)).